Consider the following 167-residue polypeptide: Regulator of sigma D (167 aa).

It belongs to the Rsd/AlgQ family. Interacts with RpoD.

The protein resides in the cytoplasm. Binds RpoD and negatively regulates RpoD-mediated transcription activation by preventing the interaction between the primary sigma factor RpoD with the catalytic core of the RNA polymerase and with promoter DNA. May be involved in replacement of the RNA polymerase sigma subunit from RpoD to RpoS during the transition from exponential growth to the stationary phase. This is Regulator of sigma D from Yersinia enterocolitica serotype O:8 / biotype 1B (strain NCTC 13174 / 8081).